Consider the following 562-residue polypeptide: Adenylate kinase isoenzyme 5 (562 aa).

Adenylate kinase stretches follow at residues 133–316 (KIIL…VAVD) and 377–559 (KIIF…TAID). Residue 142-147 (GSGKGT) coordinates ATP. The tract at residues 162–193 (SVGELLRKKIHSASSNRKWSLIAKIITNGELA) is NMP 1. AMP-binding positions include R168, 191-193 (ELA), 219-222 (GFPR), and Q226. Residues 256–266 (KRAEQQGRPDD) form an LID 1 region. R257 provides a ligand contact to ATP. R263 and R274 together coordinate AMP. Residue 386–391 (GSGKGT) coordinates ATP. The NMP 2 stretch occupies residues 406 to 435 (STGELLRQELTSESERSKLIRDIMERGDLV). AMP contacts are provided by residues T407, R412, 433–435 (DLV), 462–465 (GYPR), and Q469. The tract at residues 499 to 509 (QRSQSSQRGED) is LID 2. R500 provides a ligand contact to ATP. Positions 506 and 517 each coordinate AMP. Residue G545 coordinates ATP.

It belongs to the adenylate kinase family. As to quaternary structure, monomer. Interacts with YWHAZ. As to expression, brain specific.

The protein localises to the cytoplasm. The enzyme catalyses AMP + ATP = 2 ADP. The catalysed reaction is a 2'-deoxyribonucleoside 5'-diphosphate + ATP = a 2'-deoxyribonucleoside 5'-triphosphate + ADP. It carries out the reaction a ribonucleoside 5'-diphosphate + ATP = a ribonucleoside 5'-triphosphate + ADP. Nucleoside monophosphate (NMP) kinase that catalyzes the reversible transfer of the terminal phosphate group between nucleoside triphosphates and monophosphates. Active on AMP and dAMP with ATP as a donor. When GTP is used as phosphate donor, the enzyme phosphorylates AMP, CMP, and to a small extent dCMP. Also displays broad nucleoside diphosphate kinase activity. The protein is Adenylate kinase isoenzyme 5 (Ak5) of Mus musculus (Mouse).